Consider the following 383-residue polypeptide: Succinyl-diaminopimelate desuccinylase (383 aa).

H73 provides a ligand contact to Zn(2+). D75 is a catalytic residue. D107 provides a ligand contact to Zn(2+). Catalysis depends on E141, which acts as the Proton acceptor. Zn(2+) contacts are provided by E142, E170, and H356.

Belongs to the peptidase M20A family. DapE subfamily. As to quaternary structure, homodimer. Requires Zn(2+) as cofactor. Co(2+) is required as a cofactor.

It catalyses the reaction N-succinyl-(2S,6S)-2,6-diaminopimelate + H2O = (2S,6S)-2,6-diaminopimelate + succinate. It participates in amino-acid biosynthesis; L-lysine biosynthesis via DAP pathway; LL-2,6-diaminopimelate from (S)-tetrahydrodipicolinate (succinylase route): step 3/3. Its function is as follows. Catalyzes the hydrolysis of N-succinyl-L,L-diaminopimelic acid (SDAP), forming succinate and LL-2,6-diaminopimelate (DAP), an intermediate involved in the bacterial biosynthesis of lysine and meso-diaminopimelic acid, an essential component of bacterial cell walls. This is Succinyl-diaminopimelate desuccinylase from Pseudomonas aeruginosa (strain ATCC 15692 / DSM 22644 / CIP 104116 / JCM 14847 / LMG 12228 / 1C / PRS 101 / PAO1).